Reading from the N-terminus, the 282-residue chain is Pantothenate synthetase (282 aa).

30 to 37 (MGNLHEGH) contacts ATP. Residue H37 is the Proton donor of the active site. Q61 contacts (R)-pantoate. A beta-alanine-binding site is contributed by Q61. 149–152 (GEKD) is an ATP binding site. Q155 lines the (R)-pantoate pocket. Residues V178 and 186–189 (KSSR) contribute to the ATP site.

Belongs to the pantothenate synthetase family. Homodimer.

Its subcellular location is the cytoplasm. The enzyme catalyses (R)-pantoate + beta-alanine + ATP = (R)-pantothenate + AMP + diphosphate + H(+). It functions in the pathway cofactor biosynthesis; (R)-pantothenate biosynthesis; (R)-pantothenate from (R)-pantoate and beta-alanine: step 1/1. Its function is as follows. Catalyzes the condensation of pantoate with beta-alanine in an ATP-dependent reaction via a pantoyl-adenylate intermediate. The sequence is that of Pantothenate synthetase from Marinobacter nauticus (strain ATCC 700491 / DSM 11845 / VT8) (Marinobacter aquaeolei).